The chain runs to 227 residues: Phosphoribosylaminoimidazole-succinocarboxamide synthase (227 aa).

This sequence belongs to the SAICAR synthetase family.

The catalysed reaction is 5-amino-1-(5-phospho-D-ribosyl)imidazole-4-carboxylate + L-aspartate + ATP = (2S)-2-[5-amino-1-(5-phospho-beta-D-ribosyl)imidazole-4-carboxamido]succinate + ADP + phosphate + 2 H(+). Its pathway is purine metabolism; IMP biosynthesis via de novo pathway; 5-amino-1-(5-phospho-D-ribosyl)imidazole-4-carboxamide from 5-amino-1-(5-phospho-D-ribosyl)imidazole-4-carboxylate: step 1/2. The sequence is that of Phosphoribosylaminoimidazole-succinocarboxamide synthase from Clostridium tetani (strain Massachusetts / E88).